The sequence spans 158 residues: D-aminoacyl-tRNA deacylase (158 aa).

Residues 143 to 144 (GP) carry the Gly-cisPro motif, important for rejection of L-amino acids motif.

This sequence belongs to the DTD family. Homodimer.

Its subcellular location is the cytoplasm. The catalysed reaction is glycyl-tRNA(Ala) + H2O = tRNA(Ala) + glycine + H(+). The enzyme catalyses a D-aminoacyl-tRNA + H2O = a tRNA + a D-alpha-amino acid + H(+). Its function is as follows. An aminoacyl-tRNA editing enzyme that deacylates mischarged D-aminoacyl-tRNAs. Also deacylates mischarged glycyl-tRNA(Ala), protecting cells against glycine mischarging by AlaRS. Acts via tRNA-based rather than protein-based catalysis; rejects L-amino acids rather than detecting D-amino acids in the active site. By recycling D-aminoacyl-tRNA to D-amino acids and free tRNA molecules, this enzyme counteracts the toxicity associated with the formation of D-aminoacyl-tRNA entities in vivo and helps enforce protein L-homochirality. This is D-aminoacyl-tRNA deacylase from Solidesulfovibrio magneticus (strain ATCC 700980 / DSM 13731 / RS-1) (Desulfovibrio magneticus).